Reading from the N-terminus, the 636-residue chain is ATP-dependent RNA helicase DBP9 (636 aa).

A disordered region spans residues Met-1–Ser-44. The span at Ala-31–Ser-44 shows a compositional bias: low complexity. A Q motif motif is present at residues Ser-43–Ser-71. Residues Ile-74–Leu-253 form the Helicase ATP-binding domain. Ala-87 to Thr-94 provides a ligand contact to ATP. A DEAD box motif is present at residues Asp-201 to Asp-204. The Helicase C-terminal domain maps to Glu-264–Gly-489. 2 disordered regions span residues Glu-352–Gln-407 and Asp-600–Lys-636. The span at Asp-356 to Asn-378 shows a compositional bias: basic and acidic residues. Composition is skewed to basic residues over residues Pro-392 to Asp-401 and Lys-603 to Gly-612.

Belongs to the DEAD box helicase family. DDX56/DBP9 subfamily.

It localises to the nucleus. The protein resides in the nucleolus. The enzyme catalyses ATP + H2O = ADP + phosphate + H(+). ATP-binding RNA helicase involved in the biogenesis of 60S ribosomal subunits and is required for the normal formation of 25S and 5.8S rRNAs. The polypeptide is ATP-dependent RNA helicase DBP9 (DBP9) (Pyricularia oryzae (strain 70-15 / ATCC MYA-4617 / FGSC 8958) (Rice blast fungus)).